The chain runs to 201 residues: Dimethylsulfoniopropionate lyase DddQ (201 aa).

A divalent metal cation contacts are provided by H130, E134, Y136, and H169.

It belongs to the non-heme iron-dependent dioxygenase family. Homodimer. The cofactor is a divalent metal cation.

The enzyme catalyses S,S-dimethyl-beta-propiothetin = acrylate + dimethyl sulfide + H(+). May act as a dimethylsulfoniopropionate (DMSP) in vitro, releasing dimethyl sulfide (DMS). DMS is the principal form by which sulfur is transported from oceans to the atmosphere. The real activity of the protein is however subject to debate and it is unclear whether it constitutes a real dimethylsulfoniopropionate lyase in vivo. The polypeptide is Dimethylsulfoniopropionate lyase DddQ (Ruegeria pomeroyi (strain ATCC 700808 / DSM 15171 / DSS-3) (Silicibacter pomeroyi)).